The primary structure comprises 329 residues: Malate dehydrogenase (329 aa).

12–18 is a binding site for NAD(+); the sequence is GAAGQIG. Residues R95 and R101 each coordinate substrate. Residues N108, Q115, and 132–134 each bind NAD(+); that span reads VGN. Residues N134 and R165 each contribute to the substrate site. H190 acts as the Proton acceptor in catalysis.

The protein belongs to the LDH/MDH superfamily. MDH type 2 family.

The catalysed reaction is (S)-malate + NAD(+) = oxaloacetate + NADH + H(+). In terms of biological role, catalyzes the reversible oxidation of malate to oxaloacetate. The polypeptide is Malate dehydrogenase (Herminiimonas arsenicoxydans).